The chain runs to 79 residues: Small ribosomal subunit protein bS18 (79 aa).

The protein belongs to the bacterial ribosomal protein bS18 family. As to quaternary structure, part of the 30S ribosomal subunit. Forms a tight heterodimer with protein bS6.

In terms of biological role, binds as a heterodimer with protein bS6 to the central domain of the 16S rRNA, where it helps stabilize the platform of the 30S subunit. This is Small ribosomal subunit protein bS18 from Micrococcus luteus (strain ATCC 4698 / DSM 20030 / JCM 1464 / CCM 169 / CCUG 5858 / IAM 1056 / NBRC 3333 / NCIMB 9278 / NCTC 2665 / VKM Ac-2230) (Micrococcus lysodeikticus).